The chain runs to 131 residues: uncharacterized protein (131 aa).

Its subcellular location is the plastid. The protein localises to the chloroplast. This is an uncharacterized protein from Chlorella vulgaris (Green alga).